The following is a 291-amino-acid chain: 4-diphosphocytidyl-2-C-methyl-D-erythritol kinase (291 aa).

Lys-8 is an active-site residue. 89 to 99 lines the ATP pocket; sequence PIGSGIGGGSS. The active site involves Asp-131.

Belongs to the GHMP kinase family. IspE subfamily.

The catalysed reaction is 4-CDP-2-C-methyl-D-erythritol + ATP = 4-CDP-2-C-methyl-D-erythritol 2-phosphate + ADP + H(+). It participates in isoprenoid biosynthesis; isopentenyl diphosphate biosynthesis via DXP pathway; isopentenyl diphosphate from 1-deoxy-D-xylulose 5-phosphate: step 3/6. In terms of biological role, catalyzes the phosphorylation of the position 2 hydroxy group of 4-diphosphocytidyl-2C-methyl-D-erythritol. This Chlamydia abortus (strain DSM 27085 / S26/3) (Chlamydophila abortus) protein is 4-diphosphocytidyl-2-C-methyl-D-erythritol kinase.